The sequence spans 791 residues: Interleukin-17 receptor C (791 aa).

An N-terminal signal peptide occupies residues 1 to 20 (MPVPWFLLSLALGRSPVVLS). Residues 21-538 (LERLVGPQDA…CPMDKYIHKR (518 aa)) lie on the Extracellular side of the membrane. N-linked (GlcNAc...) asparagine glycosylation is found at N189 and N257. A disulfide bond links C265 and C277. N284, N297, N324, and N334 each carry an N-linked (GlcNAc...) asparagine glycan. 3 disulfide bridges follow: C341/C391, C343/C359, and C400/C409. 3 N-linked (GlcNAc...) asparagine glycosylation sites follow: N420, N443, and N477. A disulfide bridge links C439 with C453. Intrachain disulfides connect C481/C488 and C515/C529. Residues 539-559 (WALVWLACLLFAAALSLILLL) traverse the membrane as a helical segment. Topologically, residues 560 to 791 (KKDHAKGWLR…GAGPGAGDGT (232 aa)) are cytoplasmic. Positions 583 to 735 (GRAALLLYSA…LPSQLPDFLG (153 aa)) constitute an SEFIR domain. Residues 762–791 (ALDSYFHPPGTPAPGRGVGPGAGPGAGDGT) are disordered. The segment covering 777–791 (RGVGPGAGPGAGDGT) has biased composition (gly residues).

As to quaternary structure, homodimer; disulfide-linked. Heterodimer with IL17RA. Heterodimerization with IL17RA is independent of the cytoplasmic tail. Associates with non-glycosylated IL17RA constitutively. Binding of IL17A and IL17F induces association with glycosylated IL17RA. Forms complexes with 2:1 binding stoichiometry: two receptor chains for one interleukin molecule. IL17A homodimer preferentially drives the formation of IL17RA-IL17RC heterodimeric receptor complex, whereas IL17F homodimer forms predominantly complexes with IL17RC homodimer. IL17A-IL17F forms complexes with IL17RA-IL17RC, but with lower affinity when compared to IL17A homodimer. IL17RC chain cannot distinguish between IL17A and IL17F molecules, potentially enabling the formation of topologically distinct complexes. Interacts (through SEFIR domain and extended downstream region) with TRAF3IP2/ACT1 (phosphorylated). In terms of tissue distribution, expressed in prostate, skeletal muscle, kidney and placenta (at protein level). Expressed in brain, cartilage, colon, heart, intestine, kidney, liver, lung, muscle, placenta, and prostate. Also detected in thyroid, trachea and adrenal gland. Low expression in thymus and leukocytes.

The protein resides in the cell membrane. Its function is as follows. Receptor for IL17A and IL17F, major effector cytokines of innate and adaptive immune system involved in antimicrobial host defense and maintenance of tissue integrity. Receptor for IL17A and IL17F, major effector cytokines of innate and adaptive immune system involved in antimicrobial host defense and maintenance of tissue integrity. Receptor for IL17A and IL17F homodimers as part of a heterodimeric complex with IL17RA. Receptor for the heterodimer formed by IL17A and IL17B as part of a heterodimeric complex with IL17RA. Has also been shown to be the cognate receptor for IL17F and to bind IL17A with high affinity without the need for IL17RA. Upon binding of IL17F homodimer triggers downstream activation of TRAF6 and NF-kappa-B signaling pathway. Induces transcriptional activation of IL33, a potent cytokine that stimulates group 2 innate lymphoid cells and adaptive T-helper 2 cells involved in pulmonary allergic response to fungi. Promotes sympathetic innervation of peripheral organs by coordinating the communication between gamma-delta T cells and parenchymal cells. Stimulates sympathetic innervation of thermogenic adipose tissue by driving TGFB1 expression. Binding of IL17A-IL17F to IL17RA-IL17RC heterodimeric receptor complex triggers homotypic interaction of IL17RA and IL17RC chains with TRAF3IP2 adapter through SEFIR domains. This leads to downstream TRAF6-mediated activation of NF-kappa-B and MAPkinase pathways ultimately resulting in transcriptional activation of cytokines, chemokines, antimicrobial peptides and matrix metalloproteinases, with potential strong immune inflammation. Primarily induces neutrophil activation and recruitment at infection and inflammatory sites. Stimulates the production of antimicrobial beta-defensins DEFB1, DEFB103A, and DEFB104A by mucosal epithelial cells, limiting the entry of microbes through the epithelial barriers. In terms of biological role, receptor for both IL17A and IL17F. Functionally, does not bind IL17A or IL17F. The polypeptide is Interleukin-17 receptor C (IL17RC) (Homo sapiens (Human)).